The sequence spans 184 residues: Thymidine kinase (184 aa).

ATP contacts are provided by residues 10-17, H53, and 83-86; these read GPMYSGKT and DEVQ. E84 acts as the Proton acceptor in catalysis. H115 lines the substrate pocket. Zn(2+) is bound by residues C140 and C143. Substrate is bound by residues 161–164 and Y169; that span reads IDVG. The Zn(2+) site is built by C173 and C176.

The protein belongs to the thymidine kinase family. As to quaternary structure, homotetramer.

Its subcellular location is the cytoplasm. It catalyses the reaction thymidine + ATP = dTMP + ADP + H(+). The chain is Thymidine kinase (tdk) from Thermotoga maritima (strain ATCC 43589 / DSM 3109 / JCM 10099 / NBRC 100826 / MSB8).